A 1778-amino-acid polypeptide reads, in one-letter code: MESFKELAREYDEKFKAFQDDLQKWEETSERKEYAEFHRVQAESEFPELKREREDRERWARAERIRGEDEKSMLAKEHADKKIRLGVAKIPRLLTESERKMDEFVERPGSILKDMKKEHRQSVLDRLEEWSPEERSLFKSRQADHVKIFHGLTEFFVDKTASDLVLFYYMNKKTEDYKKDFKPKKRVTKYKVGAFPSVEELAYFRMMPPLDFSSFPKNSLMCYFCCRTVNGIDLNGTFMPKEAYEIFAICPDEDRVVCSGCREEAAKLYKDNRCFGNRCSNQKKRANRVNRNIPLDFADFPVRTRAFIMDKLGSTRVAVKFCTPCKNALTRWINDVNNKEETIMAELLNYEGQVGWTDDEKTKLVTLINSSPTLDWVSISEGMNRRPNECKMQYDAMNGVKTQPMIEEVDEEDGNGQEEGGDALVNTPTTSSAAARRSGLARNAKKPVRTPRAPRSAGGRRTGGAVTRAQAVPKPVEDLGEEIDEMEIEDNDEDASRGSRGKDSKAPSDRDGSPADMEGDSPEGQDQDADQDQDQDQDVDEEEEEVIVRDIDSPVKTLLSPKILSGGHKPDFPPVPRIQKPSTSSQPPPPEPMDTKENESDDGEEDNDILEIDVDEPPAKRPTPTSSSSHLIGSSSVGGSERELGGRGLVQQQQQQQPQAQSAAPPVTVSTAAAATAERLVNATSPSPSVASQHLVPTETSTSVPPVTIVPPAIQQPVVVISGAAPQFTQQQTTHSPALIAQPIPQQLIPQRVSTPAQILTPTPVRPTAASTPSMDQFLGLFKQQQQQQQQQPQQSNLMQQLGNINPQFLALLLQQQQQQQQVQQAQVQAAQTQGSLTSGTPFQAQQRPDEALQKLFSSPEMLGTLLNAKYQFPQFPQAIQQNPLLMNAQHQLILQQQQLAMQHAQAQAAQAAQAQAAQAAQAQAQAQAEAKLKTQAAQAKAQADAQARVQTQQQAHLKAQAQAQYQMNRPQLIPASVQMPIGINTAYHQKSLTPSETSASATPPAHRPRAATTVGSKMPAGRSNVQEAELRTLKEELIKRIRLFRDRIAEDAHLKREEENIVTYTAQIQASRVQYNTEILGQMKQRYEQAAARRIEIVKELDEPAKFINGVQNKFNDFSVFKLDEIDRQTLHEILQRYAAEQKPDQLQQQQNDFHNLLRQNNIGIRQAQYPALQASPHQAAIIQHQQQQEAFKKLQQQHQDAQKRKLEAPVSSATPQVKRIALSQSSPVQRFSQHPNGTLPHNLAVVYQNKMPQDREKLLQEQQLNQYLFAAQQQHLQQQQQHHGTQPEQKSKRKSGIESITSMQGAPHRHIQLAGPSSSRIQSGRGVSPALSASRSVAPTISGAAGRSITAGTSGHSSTSDYNKELAERMNEVFKPTHPQLLQTKASAMNSNAVSPANTNNSDEIECVYQGPPKTPASIKRLQPTEGPRTLSGQRMKSILSVPAHQRRSSIPPVKTEDEAMECLSMMMYEEAKAPPSDRIVTKLISSSEAAAAANPSAKFSYLDIFNDVVKRDEERCQRMLQSTSVLQPSRELDAFLQQLQQNPQQYANLSAAEKLALQQYQIHSAHQKSQQQAQLQAAQQLQQQQQARPDHYEKFHLLRPNAEIVRPIPTTFSHFLNKATTSTVSSSASAPQFLQPPAAASIAAPTPISTPHAMPSPSVGVQTAPPTPQAVHHPVMPIIPGKPSSVNSNVSDVSSDDDDVRNPEKLPANRLPPLPGDKTAFRSVIDLRATGHVAVTKKIPVKYPLVVQAQNGIQPIKDYGPPCKNLVYEDLSDDE.

The SANT domain occupies 125-176 (DRLEEWSPEERSLFKSRQADHVKIFHGLTEFFVDKTASDLVLFYYMNKKTED). Residues 356–398 (WTDDEKTKLVTLINSSPTLDWVSISEGMNRRPNECKMQYDAMN) enclose the Myb-like domain. Residues 409–421 (VDEEDGNGQEEGG) are compositionally biased toward acidic residues. Disordered stretches follow at residues 409–671 (VDEE…TVST), 992–1024 (SLTP…AGRS), 1195–1218 (KLQQ…ATPQ), 1276–1339 (QHLQ…SRSV), 1414–1434 (PPKT…RTLS), and 1646–1718 (AAPT…PPLP). 2 stretches are compositionally biased toward low complexity: residues 431 to 442 (SSAAARRSGLAR) and 450 to 469 (TPRA…VTRA). Residues 478–493 (DLGEEIDEMEIEDNDE) are compositionally biased toward acidic residues. The span at 494 to 513 (DASRGSRGKDSKAPSDRDGS) shows a compositional bias: basic and acidic residues. Acidic residues-rich tracts occupy residues 517 to 545 (MEGD…EEEE) and 599 to 616 (ESDD…DVDE). 2 stretches are compositionally biased toward low complexity: residues 626–639 (SSSS…SVGG) and 649–671 (LVQQ…TVST). The segment covering 1276 to 1285 (QHLQQQQQHH) has biased composition (low complexity). The segment covering 1687–1696 (SSVNSNVSDV) has biased composition (low complexity).

The protein belongs to the N-CoR nuclear receptor corepressors family. Interacts with gex-3. Interacts (via C-terminus) with nhr-60. As to expression, in larvae, expressed in pharyngeal neurons, ventral and dorsal nerve cords, tail neurons, egg-laying neurons and egg-laying muscles. Detected in the neurons of the pharyngeal nerve ring, head neurons, tail neurons and egg-laying muscles in adults. Detected in male-specific tail ganglia and rays in males.

The protein localises to the nucleus. In terms of biological role, mediates transcriptional repression by certain nuclear receptors. Plays a role in development and neuronal function. May play a role in muscle-specific oxidative mitochondrial metabolism. This Caenorhabditis elegans protein is Nuclear receptor corepressor 1.